The following is an 810-amino-acid chain: Coiled-coil domain-containing protein 15 (810 aa).

Coiled coils occupy residues 65-89 (VVEE…RQVR), 160-189 (DGEN…SFKT), and 638-669 (MDIE…EQQR).

In terms of assembly, interacts with POC5, POC1B, CETN2 and FAM161A.

It localises to the cytoplasm. Its subcellular location is the cytoskeleton. The protein localises to the microtubule organizing center. The protein resides in the centrosome. It is found in the centriole. It localises to the centriolar satellite. In terms of biological role, plays an important role in primary cilium assembly, maintenance, and length regulation. Interacts with centriole inner scaffold proteins to promote proper centriole size and integrity and assembly of functional cilia. Required for the recruitment of both the inner scaffold protein POC1B and the distal SFI1/CETN2 complex to centrioles. This Mus musculus (Mouse) protein is Coiled-coil domain-containing protein 15 (Ccdc15).